The chain runs to 30 residues: Thaumatin-like protein (30 aa).

This sequence belongs to the thaumatin family.

It localises to the secreted. Has antifungal activity against C.comatus, F.oxysporum and P.ostreatus. The polypeptide is Thaumatin-like protein (Phaseolus vulgaris (Kidney bean)).